The sequence spans 137 residues: MNATATQDRPIYWGTGRRKASIARVRLVPGSGKVVVNNRSGEDYFNRIPGYLAVLKSPLETLGLESEYDILVNAHGGGLTGQADAVKLGVARALCELDPDNRQPLKIEGYLTRDPRCKERKKYGLHKARKAPQFSKR.

Belongs to the universal ribosomal protein uS9 family.

The chain is Small ribosomal subunit protein uS9 from Picosynechococcus sp. (strain ATCC 27264 / PCC 7002 / PR-6) (Agmenellum quadruplicatum).